The sequence spans 130 residues: Small ribosomal subunit protein uS8 (130 aa).

It belongs to the universal ribosomal protein uS8 family. In terms of assembly, part of the 30S ribosomal subunit. Contacts proteins S5 and S12.

Its function is as follows. One of the primary rRNA binding proteins, it binds directly to 16S rRNA central domain where it helps coordinate assembly of the platform of the 30S subunit. This is Small ribosomal subunit protein uS8 from Pseudomonas putida (strain ATCC 700007 / DSM 6899 / JCM 31910 / BCRC 17059 / LMG 24140 / F1).